The following is a 238-amino-acid chain: Urease accessory protein UreF (238 aa).

Belongs to the UreF family. As to quaternary structure, ureD, UreF and UreG form a complex that acts as a GTP-hydrolysis-dependent molecular chaperone, activating the urease apoprotein by helping to assemble the nickel containing metallocenter of UreC. The UreE protein probably delivers the nickel.

Its subcellular location is the cytoplasm. Functionally, required for maturation of urease via the functional incorporation of the urease nickel metallocenter. This Delftia acidovorans (strain DSM 14801 / SPH-1) protein is Urease accessory protein UreF.